A 20-amino-acid chain; its full sequence is Ranalexin-1Ca (20 aa).

Residues C14 and C20 are joined by a disulfide bond.

Expressed by the skin glands.

The protein localises to the secreted. In terms of biological role, antibacterial activity against Gram-positive bacterium S.aureus (MIC=17 uM) and Gram-negative bacterium E.coli (MIC=4 uM). Has activity against C.albicans (MIC=14 uM). The protein is Ranalexin-1Ca of Lithobates clamitans (Green frog).